The sequence spans 468 residues: Argininosuccinate lyase (468 aa).

It belongs to the lyase 1 family. Argininosuccinate lyase subfamily.

Its subcellular location is the cytoplasm. The catalysed reaction is 2-(N(omega)-L-arginino)succinate = fumarate + L-arginine. It participates in amino-acid biosynthesis; L-arginine biosynthesis; L-arginine from L-ornithine and carbamoyl phosphate: step 3/3. This is Argininosuccinate lyase from Cutibacterium acnes (strain DSM 16379 / KPA171202) (Propionibacterium acnes).